The sequence spans 564 residues: Proline--tRNA ligase (564 aa).

It belongs to the class-II aminoacyl-tRNA synthetase family. ProS type 1 subfamily. In terms of assembly, homodimer.

The protein localises to the cytoplasm. The catalysed reaction is tRNA(Pro) + L-proline + ATP = L-prolyl-tRNA(Pro) + AMP + diphosphate. Catalyzes the attachment of proline to tRNA(Pro) in a two-step reaction: proline is first activated by ATP to form Pro-AMP and then transferred to the acceptor end of tRNA(Pro). As ProRS can inadvertently accommodate and process non-cognate amino acids such as alanine and cysteine, to avoid such errors it has two additional distinct editing activities against alanine. One activity is designated as 'pretransfer' editing and involves the tRNA(Pro)-independent hydrolysis of activated Ala-AMP. The other activity is designated 'posttransfer' editing and involves deacylation of mischarged Ala-tRNA(Pro). The misacylated Cys-tRNA(Pro) is not edited by ProRS. The protein is Proline--tRNA ligase of Coxiella burnetii (strain Dugway 5J108-111).